We begin with the raw amino-acid sequence, 138 residues long: Putative pre-16S rRNA nuclease (138 aa).

This sequence belongs to the YqgF nuclease family.

The protein localises to the cytoplasm. Could be a nuclease involved in processing of the 5'-end of pre-16S rRNA. The polypeptide is Putative pre-16S rRNA nuclease (Geobacillus thermodenitrificans (strain NG80-2)).